Here is a 373-residue protein sequence, read N- to C-terminus: Chorismate synthase (373 aa).

Residue R46 coordinates NADP(+). FMN is bound by residues 123-125 (RSS), 250-251 (NA), G295, 310-314 (KPTPS), and R337.

This sequence belongs to the chorismate synthase family. Requires FMNH2 as cofactor.

It carries out the reaction 5-O-(1-carboxyvinyl)-3-phosphoshikimate = chorismate + phosphate. It participates in metabolic intermediate biosynthesis; chorismate biosynthesis; chorismate from D-erythrose 4-phosphate and phosphoenolpyruvate: step 7/7. Its function is as follows. Catalyzes the anti-1,4-elimination of the C-3 phosphate and the C-6 proR hydrogen from 5-enolpyruvylshikimate-3-phosphate (EPSP) to yield chorismate, which is the branch point compound that serves as the starting substrate for the three terminal pathways of aromatic amino acid biosynthesis. This reaction introduces a second double bond into the aromatic ring system. The protein is Chorismate synthase of Methanococcus aeolicus (strain ATCC BAA-1280 / DSM 17508 / OCM 812 / Nankai-3).